We begin with the raw amino-acid sequence, 541 residues long: Membrane protein insertase YidC (541 aa).

The chain crosses the membrane as a helical span at residues 6–26 (SLLVLALIFISFLVYQQWQLD). Residues 34-56 (EQTTSITATSDVPASSPSNSQAI) form a disordered region. 4 helical membrane-spanning segments follow: residues 337–357 (FWLL…IICV), 416–436 (LGGC…YWTF), 454–474 (LSAQ…MFLL), and 495–515 (PLVF…YWLV).

The protein belongs to the OXA1/ALB3/YidC family. Type 1 subfamily. In terms of assembly, interacts with the Sec translocase complex via SecD. Specifically interacts with transmembrane segments of nascent integral membrane proteins during membrane integration.

It is found in the cell inner membrane. Functionally, required for the insertion and/or proper folding and/or complex formation of integral membrane proteins into the membrane. Involved in integration of membrane proteins that insert both dependently and independently of the Sec translocase complex, as well as at least some lipoproteins. Aids folding of multispanning membrane proteins. This Haemophilus influenzae (strain ATCC 51907 / DSM 11121 / KW20 / Rd) protein is Membrane protein insertase YidC.